The following is a 227-amino-acid chain: uncharacterized protein (227 aa).

4 helical membrane passes run 17–37, 79–99, 112–132, and 181–201; these read VGIK…GVFS, GFLF…IISI, LMTP…LALI, and VAVF…ILVF.

It localises to the cell membrane. This is an uncharacterized protein from Escherichia coli (strain K12).